Reading from the N-terminus, the 167-residue chain is Ribosome maturation factor RimM (167 aa).

The 72-residue stretch at 94 to 165 (ENEYYYSDII…KIIITPMEGL (72 aa)) folds into the PRC barrel domain.

Belongs to the RimM family. As to quaternary structure, binds ribosomal protein uS19.

It localises to the cytoplasm. An accessory protein needed during the final step in the assembly of 30S ribosomal subunit, possibly for assembly of the head region. Essential for efficient processing of 16S rRNA. May be needed both before and after RbfA during the maturation of 16S rRNA. It has affinity for free ribosomal 30S subunits but not for 70S ribosomes. The polypeptide is Ribosome maturation factor RimM (Staphylococcus aureus (strain bovine RF122 / ET3-1)).